The following is a 311-amino-acid chain: tRNA-cytidine(32) 2-sulfurtransferase (311 aa).

A PP-loop motif motif is present at residues 47–52 (SGGKDS). 3 residues coordinate [4Fe-4S] cluster: Cys-122, Cys-125, and Cys-213.

It belongs to the TtcA family. Homodimer. It depends on Mg(2+) as a cofactor. [4Fe-4S] cluster serves as cofactor.

It is found in the cytoplasm. The catalysed reaction is cytidine(32) in tRNA + S-sulfanyl-L-cysteinyl-[cysteine desulfurase] + AH2 + ATP = 2-thiocytidine(32) in tRNA + L-cysteinyl-[cysteine desulfurase] + A + AMP + diphosphate + H(+). It participates in tRNA modification. Its function is as follows. Catalyzes the ATP-dependent 2-thiolation of cytidine in position 32 of tRNA, to form 2-thiocytidine (s(2)C32). The sulfur atoms are provided by the cysteine/cysteine desulfurase (IscS) system. The protein is tRNA-cytidine(32) 2-sulfurtransferase of Salmonella typhimurium (strain LT2 / SGSC1412 / ATCC 700720).